We begin with the raw amino-acid sequence, 500 residues long: Na(+)/H(+) antiporter NhaB (500 aa).

A run of 13 helical transmembrane segments spans residues His11–Leu31, Leu34–Phe54, Met58–Leu78, Val96–Phe116, Ala129–Leu149, Thr150–Ala170, Leu205–Pro225, Phe241–Val261, Ile311–Ile331, Phe350–Ile370, Met394–Ile414, Ala450–Ile470, and Met477–Thr497.

The protein belongs to the NhaB Na(+)/H(+) (TC 2.A.34) antiporter family.

The protein localises to the cell inner membrane. The enzyme catalyses 2 Na(+)(in) + 3 H(+)(out) = 2 Na(+)(out) + 3 H(+)(in). Its function is as follows. Na(+)/H(+) antiporter that extrudes sodium in exchange for external protons. This is Na(+)/H(+) antiporter NhaB from Pseudomonas putida (strain GB-1).